An 89-amino-acid polypeptide reads, in one-letter code: Small ribosomal subunit protein uS14 (89 aa).

Positions 52, 55, 68, and 71 each coordinate Zn(2+).

This sequence belongs to the universal ribosomal protein uS14 family. As to quaternary structure, part of the 30S ribosomal subunit. Contacts proteins S3 and S10. It depends on Zn(2+) as a cofactor.

Binds 16S rRNA, required for the assembly of 30S particles and may also be responsible for determining the conformation of the 16S rRNA at the A site. In Salinibacter ruber (strain DSM 13855 / M31), this protein is Small ribosomal subunit protein uS14 (rpsN).